The primary structure comprises 186 residues: Potassium-transporting ATPase KdpC subunit (186 aa).

Residues leucine 10–glycine 30 traverse the membrane as a helical segment.

The protein belongs to the KdpC family. As to quaternary structure, the system is composed of three essential subunits: KdpA, KdpB and KdpC.

Its subcellular location is the cell membrane. Part of the high-affinity ATP-driven potassium transport (or Kdp) system, which catalyzes the hydrolysis of ATP coupled with the electrogenic transport of potassium into the cytoplasm. This subunit acts as a catalytic chaperone that increases the ATP-binding affinity of the ATP-hydrolyzing subunit KdpB by the formation of a transient KdpB/KdpC/ATP ternary complex. The chain is Potassium-transporting ATPase KdpC subunit from Staphylococcus aureus (strain COL).